The sequence spans 490 residues: Aspartyl aminopeptidase 4 (490 aa).

A Zn(2+)-binding site is contributed by His97. His173 contacts substrate. The Zn(2+) site is built by Asp273, Glu308, Glu309, and Asp362. Substrate is bound at residue Glu308. Residues Asp362, His365, Lys390, and Tyr397 each coordinate substrate. Residue His456 coordinates Zn(2+).

It belongs to the peptidase M18 family. Tetrahedron-shaped homododecamer built from six homodimers. It depends on Zn(2+) as a cofactor.

It is found in the cytoplasm. It localises to the vacuole lumen. It carries out the reaction Release of an N-terminal aspartate or glutamate from a peptide, with a preference for aspartate.. The metalloproteases inhibitors EDTA and 1.10-phenanthroline both inhibit the activity, whereas bestatin, an inhibitor of most aminopeptidases, does not affect enzyme activity. Its function is as follows. Aspartyl aminopeptidase that contributes to peptide degradation both in the cytosol and the vacuole. Cells may respond to environmental conditions by changing the distributions of the cytosolic enzyme to the vacuole when cells need more active vacuolar degradation. The chain is Aspartyl aminopeptidase 4 (APE4) from Saccharomyces cerevisiae (strain ATCC 204508 / S288c) (Baker's yeast).